Reading from the N-terminus, the 476-residue chain is Major facilitator superfamily domain-containing protein 12 (476 aa).

Met-1 is subject to N-acetylmethionine. The Cytoplasmic portion of the chain corresponds to 1–25 (MSPPSDDAGPGPPRTLSLAARLSFA). A helical transmembrane segment spans residues 26-46 (VGHFLNDLCAGMWFTYLLLFL). The Lumenal segment spans residues 47–55 (HSVRGYSSR). A helical transmembrane segment spans residues 56-76 (GAGLLLLLGQVADGLCTPLVG). The Cytoplasmic segment spans residues 77 to 94 (YEADRASCVRCGPRKAWH). Residues 95 to 115 (LAGTVCVLLSFPFIFSPCLGC) traverse the membrane as a helical segment. The Lumenal portion of the chain corresponds to 116–121 (GEATPE). Residues 122–142 (WAALLYYGPFIVVFQFGWAAT) form a helical membrane-spanning segment. At 143–167 (QIAHLSLIPELVTSDHEKVELTALR) the chain is on the cytoplasmic side. A helical membrane pass occupies residues 168–188 (YAFTVVANITVYGAAWLLLHL). Residues 189–213 (QGSAHGEQDISVGDQLGVQDVPVFR) lie on the Lumenal side of the membrane. The chain crosses the membrane as a helical span at residues 214-234 (NLALLVVGVGAIFSLLFHLGT). Residues 235 to 284 (KEGHRSQHWGNEPNEHTPLVAPAAQPLLLWKHWLREPAFYQVGMLYMTTR) lie on the Cytoplasmic side of the membrane. Residue Thr-251 is modified to Phosphothreonine. The chain crosses the membrane as a helical span at residues 285–305 (LIVNLSQTYIAMYLTYSLSLP). A topological domain (lumenal) is located at residue Lys-306. The chain crosses the membrane as a helical span at residues 307-327 (KFIATIPLVMYLSGFFSSFLM). The Cytoplasmic portion of the chain corresponds to 328–343 (KPVNRRIGRNMTYFTG). The next 2 membrane-spanning stretches (helical) occupy residues 344-364 (LLVILAFAAWVALADNLGVAV) and 365-385 (YGAAVLLGAGCATILVTSLAM). The Cytoplasmic portion of the chain corresponds to 386–398 (TADLIGPHTHSGA). Residues 399-419 (FVYGAMSFSDKVANGLAVMAV) form a helical membrane-spanning segment. At 420–444 (QSLHPCPSELCCGACISFYHWVMTA) the chain is on the lumenal side. Residues 445-465 (VTGGVGVAAALALCSLLIWPI) traverse the membrane as a helical segment. Topologically, residues 466–476 (RIRNRDPRDRP) are cytoplasmic.

The protein belongs to the major facilitator superfamily. Post-translationally, phosphorylation at Thr-251 by MTOR via mTORC1 pathway promotes cysteine transport in lysosomes, thereby regulating lysosomal cysteine and cystine storage and redox homeostasis.

It is found in the melanosome membrane. It localises to the lysosome membrane. The enzyme catalyses L-cysteine(in) = L-cysteine(out). Transporter that mediates the import of cysteine into melanosomes, thereby regulating skin/hair pigmentation. In melanosomes, cysteine import is required both for normal levels of cystine, the oxidized dimer of cysteine, and provide cysteine for the production of the cysteinyldopas used in pheomelanin synthesis, thereby regulating skin/hair pigmentation. Also catalyzes import of cysteine into lysosomes in non-pigmented cells, regulating lysosomal cystine and cysteine storage, which is essnetial for redox homeostasis. The protein is Major facilitator superfamily domain-containing protein 12 of Mus musculus (Mouse).